Here is a 266-residue protein sequence, read N- to C-terminus: uncharacterized protein (266 aa).

Residues 1–22 (MGYLKRLVLYIVIMVMSVFIIG) form the signal peptide. Cys23 carries N-palmitoyl cysteine lipidation. Cys23 carries S-diacylglycerol cysteine lipidation.

The protein belongs to the staphylococcal tandem lipoprotein family.

The protein localises to the cell membrane. This is an uncharacterized protein from Staphylococcus aureus (strain USA300).